We begin with the raw amino-acid sequence, 99 residues long: Evasin P1162 (99 aa).

The N-terminal stretch at 1-28 is a signal peptide; that stretch reads MEVKTFAFLQIAVCIAIGIELICAGTNA. Disulfide bonds link C40–C59, C44–C61, and C55–C72. Residues N43, N49, N58, and N85 are each glycosylated (N-linked (GlcNAc...) asparagine).

The protein resides in the secreted. Its function is as follows. Salivary chemokine-binding protein which binds to host chemokines CXCL1, CXCL2, CXCL3, CXCL5 and CXCL8. The polypeptide is Evasin P1162 (Ixodes ricinus (Common tick)).